A 258-amino-acid chain; its full sequence is Imidazole glycerol phosphate synthase subunit HisF (258 aa).

Residues D12 and D131 contribute to the active site.

It belongs to the HisA/HisF family. Heterodimer of HisH and HisF.

Its subcellular location is the cytoplasm. The catalysed reaction is 5-[(5-phospho-1-deoxy-D-ribulos-1-ylimino)methylamino]-1-(5-phospho-beta-D-ribosyl)imidazole-4-carboxamide + L-glutamine = D-erythro-1-(imidazol-4-yl)glycerol 3-phosphate + 5-amino-1-(5-phospho-beta-D-ribosyl)imidazole-4-carboxamide + L-glutamate + H(+). It participates in amino-acid biosynthesis; L-histidine biosynthesis; L-histidine from 5-phospho-alpha-D-ribose 1-diphosphate: step 5/9. Functionally, IGPS catalyzes the conversion of PRFAR and glutamine to IGP, AICAR and glutamate. The HisF subunit catalyzes the cyclization activity that produces IGP and AICAR from PRFAR using the ammonia provided by the HisH subunit. This Pseudarthrobacter chlorophenolicus (strain ATCC 700700 / DSM 12829 / CIP 107037 / JCM 12360 / KCTC 9906 / NCIMB 13794 / A6) (Arthrobacter chlorophenolicus) protein is Imidazole glycerol phosphate synthase subunit HisF.